The chain runs to 246 residues: 3-deoxy-manno-octulosonate cytidylyltransferase (246 aa).

Belongs to the KdsB family. Homodimer.

The protein localises to the cytoplasm. It carries out the reaction 3-deoxy-alpha-D-manno-oct-2-ulosonate + CTP = CMP-3-deoxy-beta-D-manno-octulosonate + diphosphate. It functions in the pathway nucleotide-sugar biosynthesis; CMP-3-deoxy-D-manno-octulosonate biosynthesis; CMP-3-deoxy-D-manno-octulosonate from 3-deoxy-D-manno-octulosonate and CTP: step 1/1. It participates in bacterial outer membrane biogenesis; lipopolysaccharide biosynthesis. In terms of biological role, activates KDO (a required 8-carbon sugar) for incorporation into bacterial lipopolysaccharide in Gram-negative bacteria. This chain is 3-deoxy-manno-octulosonate cytidylyltransferase (kpsU), found in Escherichia coli.